We begin with the raw amino-acid sequence, 924 residues long: DNA polymerase (924 aa).

The 3'-5' exonuclease domain maps to 235-386 (YPMSQQPKIV…DDCDVTFRLS (152 aa)).

Belongs to the DNA polymerase type-A family.

The enzyme catalyses DNA(n) + a 2'-deoxyribonucleoside 5'-triphosphate = DNA(n+1) + diphosphate. In terms of biological role, replicates viral genomic DNA. This polymerase possesses two enzymatic activities: DNA synthesis (polymerase) and an exonucleolytic activity that degrades single-stranded DNA in the 3'-5' direction. This chain is DNA polymerase (31), found in Bacillus phage SP01 (Bacteriophage SP01).